Reading from the N-terminus, the 345-residue chain is 4-hydroxyproline 2-epimerase 1 (345 aa).

Residue Gln85 participates in substrate binding. Ser93 functions as the Proton acceptor in the catalytic mechanism. Residues Gly94–Ser95 and Asp251 contribute to the substrate site. Residue Cys255 is the Proton donor of the active site. Residue Gly256–Thr257 coordinates substrate.

Belongs to the proline racemase family.

It carries out the reaction trans-4-hydroxy-L-proline = cis-4-hydroxy-D-proline. Functionally, catalyzes the epimerization of trans-4-hydroxy-L-proline (t4LHyp) to cis-4-hydroxy-D-proline (c4DHyp). May be involved in a degradation pathway of t4LHyp. Can also catalyze the epimerization of trans-3-hydroxy-L-proline (t3LHyp) to cis-3-hydroxy-D-proline (c3DHyp) in vitro. Displays no proline racemase activity. The chain is 4-hydroxyproline 2-epimerase 1 from Rhizobium rhizogenes (strain K84 / ATCC BAA-868) (Agrobacterium radiobacter).